Here is a 337-residue protein sequence, read N- to C-terminus: Histidine N-acetyltransferase (337 aa).

A propeptide spans 1 to 2 (MK) (removed in mature form). An N-acetyltransferase domain is found at 21 to 157 (LQFSVATEED…GILLMRFRAE (137 aa)).

Expressed exclusively in the brain and lens.

It catalyses the reaction L-histidine + acetyl-CoA = N(alpha)-acetyl-L-histidine + CoA + H(+). Functionally, enzyme responsible for the N-acetyl-histidine (NAH) synthesis, which is a major constituent of brain and lens of ectothermic vertebrates. The polypeptide is Histidine N-acetyltransferase (hisat) (Oreochromis niloticus (Nile tilapia)).